A 324-amino-acid chain; its full sequence is Lactonase drp35 (324 aa).

Positions 47, 109, 111, 129, 132, 134, 137, 184, 235, and 236 each coordinate Ca(2+). Aspartate 235 (proton donor) is an active-site residue.

It belongs to the SMP-30/CGR1 family. Ca(2+) is required as a cofactor.

It localises to the cytoplasm. Functionally, exhibits lactonase activity. Acts in cells with perturbed membrane integrity and is possibly related to the membrane homeostasis. The protein is Lactonase drp35 (drp35) of Staphylococcus aureus (strain USA300).